We begin with the raw amino-acid sequence, 837 residues long: Ribosome-releasing factor 2, mitochondrial (837 aa).

The transit peptide at 1-29 (MFSINARTKVPIWVPFIARKGFSMSTRQL) directs the protein to the mitochondrion. The tr-type G domain maps to 40–331 (LNTRNIGIIA…GVVDYLPSPL (292 aa)). GTP-binding positions include 49 to 56 (AHIDAGKT), 113 to 117 (DTPGH), and 167 to 170 (NKMD). The segment at 338 to 359 (ITASTSKVSKKQKQKKNSKVSS) is disordered. The segment covering 345 to 355 (VSKKQKQKKNS) has biased composition (basic residues).

It belongs to the TRAFAC class translation factor GTPase superfamily. Classic translation factor GTPase family. EF-G/EF-2 subfamily.

It is found in the mitochondrion. Functionally, mitochondrial GTPase that mediates the disassembly of ribosomes from messenger RNA at the termination of mitochondrial protein biosynthesis. Not involved in the GTP-dependent ribosomal translocation step during translation elongation. This is Ribosome-releasing factor 2, mitochondrial from Meyerozyma guilliermondii (strain ATCC 6260 / CBS 566 / DSM 6381 / JCM 1539 / NBRC 10279 / NRRL Y-324) (Yeast).